Reading from the N-terminus, the 185-residue chain is ATP-dependent protease subunit HslV (185 aa).

Residue Thr12 is part of the active site. Residues Ala168, Cys171, and Thr174 each coordinate Na(+).

The protein belongs to the peptidase T1B family. HslV subfamily. A double ring-shaped homohexamer of HslV is capped on each side by a ring-shaped HslU homohexamer. The assembly of the HslU/HslV complex is dependent on binding of ATP.

The protein localises to the cytoplasm. The enzyme catalyses ATP-dependent cleavage of peptide bonds with broad specificity.. Its activity is regulated as follows. Allosterically activated by HslU binding. In terms of biological role, protease subunit of a proteasome-like degradation complex believed to be a general protein degrading machinery. This is ATP-dependent protease subunit HslV from Dinoroseobacter shibae (strain DSM 16493 / NCIMB 14021 / DFL 12).